Here is a 911-residue protein sequence, read N- to C-terminus: Eukaryotic translation initiation factor 3 subunit C (911 aa).

Disordered stretches follow at residues 1 to 38 (MSRF…DDEE) and 155 to 181 (SRFR…GEAA). Positions 11–20 (SESESSEEEV) are enriched in acidic residues. A compositionally biased stretch (polar residues) spans 23–32 (PNFNKASAFQ). A phosphoserine mark is found at Ser-34, Ser-165, Ser-175, and Ser-184. A compositionally biased stretch (acidic residues) spans 162–171 (DQESEAEDEE). Low complexity predominate over residues 196-208 (APKIAKSAPAKSV). A disordered region spans residues 196-284 (APKIAKSAPA…KRAEDDEDGE (89 aa)). Residues 210–236 (ADDEDSDDSIDWDSDSESETESSEDEN) show a composition bias toward acidic residues. A compositionally biased stretch (basic and acidic residues) spans 241–271 (MRERFLKRSTEKGEDKGDDDKRKDKRKEQKL). The PCI domain maps to 642–818 (FHMHINLELL…ETVVMHRSEP (177 aa)). Positions 851-911 (FQRGNMGNRG…QQQVQTIDEE (61 aa)) are disordered. Over residues 885 to 896 (QRNRNQRGHHKN) the composition is skewed to basic residues. Residues 897–911 (QQQQQQQQVQTIDEE) show a composition bias toward low complexity.

This sequence belongs to the eIF-3 subunit C family. In terms of assembly, component of the eukaryotic translation initiation factor 3 (eIF-3) complex. The eIF-3 complex interacts with pix.

Its subcellular location is the cytoplasm. In terms of biological role, component of the eukaryotic translation initiation factor 3 (eIF-3) complex, which is involved in protein synthesis of a specialized repertoire of mRNAs and, together with other initiation factors, stimulates binding of mRNA and methionyl-tRNAi to the 40S ribosome. The eIF-3 complex specifically targets and initiates translation of a subset of mRNAs involved in cell proliferation. The protein is Eukaryotic translation initiation factor 3 subunit C of Drosophila pseudoobscura pseudoobscura (Fruit fly).